A 766-amino-acid polypeptide reads, in one-letter code: 5-methyltetrahydropteroyltriglutamate--homocysteine methyltransferase (766 aa).

5-methyltetrahydropteroyltri-L-glutamate-binding positions include 16–19 (RELK) and Lys-119. L-homocysteine contacts are provided by residues 440 to 442 (IGS) and Glu-493. L-methionine-binding positions include 440-442 (IGS) and Glu-493. 5-methyltetrahydropteroyltri-L-glutamate is bound by residues 524–525 (RC) and Trp-570. Asp-608 contacts L-homocysteine. Asp-608 serves as a coordination point for L-methionine. Glu-614 contacts 5-methyltetrahydropteroyltri-L-glutamate. 3 residues coordinate Zn(2+): His-650, Cys-652, and Glu-674. Residue His-703 is the Proton donor of the active site. Cys-735 contributes to the Zn(2+) binding site.

The protein belongs to the vitamin-B12 independent methionine synthase family. Zn(2+) is required as a cofactor.

The enzyme catalyses 5-methyltetrahydropteroyltri-L-glutamate + L-homocysteine = tetrahydropteroyltri-L-glutamate + L-methionine. The protein operates within amino-acid biosynthesis; L-methionine biosynthesis via de novo pathway; L-methionine from L-homocysteine (MetE route): step 1/1. Catalyzes the transfer of a methyl group from 5-methyltetrahydrofolate to homocysteine resulting in methionine formation. This Pseudomonas aeruginosa (strain UCBPP-PA14) protein is 5-methyltetrahydropteroyltriglutamate--homocysteine methyltransferase.